Reading from the N-terminus, the 66-residue chain is uncharacterized protein (66 aa).

The chain crosses the membrane as a helical span at residues 32–49; that stretch reads WAFSLLIAGSAFLWIYMR.

The protein localises to the membrane. This is an uncharacterized protein from Bacillus subtilis (strain 168).